The primary structure comprises 507 residues: MQQAIEQYATGGALRFNGIGKVFPGVKALSDISFEARPGSVHALMGENGAGKSTLLKILGGSYQPNSGTLQIGEQSYQFKSTAESIAAGVAVIHQELHLVPEMTVAENLLLGHMPNRFGLINRGAMYRRAGELLKGLADEIDPHTRLGDLSLGQRQLVEIAKAMSRNAHVIAFDEPTSSLSAREIDRLMAIIVRLRDEGRVILYVSHRMEEIFRVCDAVTVFKDGRFVKTFEQMADLDHDRLVTCMVGRDIQNIYNYRPRQHQGPSLRVTGLLGPGLHEPVTFAVQKGEVLGFFGLVGAGRTELFRLLSGLTRSSAGTLQLDGKPLTLKSPRDAIEAGILLCPEDRKKEGIVPLSSVAENINIGARPRHVNLGCLIQGRWERDNARSQIKSMNVKTPSPEQQIMFLSGGNQQKAILGRWLSMPMKVLLLDEPTRGIDVGAKSEIYEIIHNLAADGIAVIVVSSDLMEVMGISDRILVMSEGAITGELNRDEADESRLLQLALPRTRG.

ABC transporter domains follow at residues 14–249 and 249–505; these read LRFN…MVGR and RDIQ…LPRT. ATP is bound at residue 46 to 53; sequence GENGAGKS.

The protein belongs to the ABC transporter superfamily. Arabinose importer (TC 3.A.1.2.2) family. In terms of assembly, the complex is composed of two ATP-binding proteins (AraG), two transmembrane proteins (AraH) and a solute-binding protein (AraF).

The protein resides in the cell inner membrane. It catalyses the reaction L-arabinose(out) + ATP + H2O = L-arabinose(in) + ADP + phosphate + H(+). In terms of biological role, part of the ABC transporter complex AraFGH involved in arabinose import. Responsible for energy coupling to the transport system. The polypeptide is Arabinose import ATP-binding protein AraG (Pseudomonas syringae pv. syringae (strain B728a)).